A 463-amino-acid chain; its full sequence is Glutamate--tRNA ligase 2 (463 aa).

The 'HIGH' region signature appears at 10 to 20 (PSPTGYLHIGG). The 'KMSKS' region signature appears at 238-242 (KLSKR). An ATP-binding site is contributed by K241.

This sequence belongs to the class-I aminoacyl-tRNA synthetase family. Glutamate--tRNA ligase type 1 subfamily. In terms of assembly, monomer.

The protein resides in the cytoplasm. It catalyses the reaction tRNA(Glu) + L-glutamate + ATP = L-glutamyl-tRNA(Glu) + AMP + diphosphate. In terms of biological role, catalyzes the attachment of glutamate to tRNA(Glu) in a two-step reaction: glutamate is first activated by ATP to form Glu-AMP and then transferred to the acceptor end of tRNA(Glu). This chain is Glutamate--tRNA ligase 2, found in Helicobacter acinonychis (strain Sheeba).